A 598-amino-acid polypeptide reads, in one-letter code: MLRTHEAGSLRADHAGQTVTLTGWVARRRDHGGVAFLDLRDASGVVQVVARDEILDAGGARELRNEYCIRITGDVRLRPEGNDNANIPTGAVEVDTTALEVLSEAAPLPFQIDDHLNVGEEARLKHRYLDLRRTGPANALKLRSAANRAARAVLEEHAFTEIETPTLTRSTPEGARDFLVPARLAPGSWYALPQSPQLFKQLLMVAGMERYYQLARCYRDEDFRADRQPEFTQLDIEMSFVEQDDVIALGEQIVAALWKLIGHDVPLPLPRMTYEEAMRRYGSDKPDLRFGLELVECAGFFADTTFRVFQAPYVGAVVMPGGASQPRKTLDAWQEWAKQRGARGLAYVLVGQDGELSGPVAKNLSDTERAGLAAHVGANPGDCIFFAAGAVNPSRALLGAARAEIARRTGAIDESAWSFLWVVDAPMFKSAAEDDDVSIGEGSWNAVHHAFTAPKPEVVDTFDTDPGSALSNAYDIVCNGNEIGGGSIRIHRRDVQERVFAVMGISEADAREKFGFLLDAFSFGAPPHGGIAFGWDRVVALLAGVDSIREVIAFPKSGGGYDPLTAAPAPITAQQRKEAGVDAKPETKKAAAGEPAGA.

Glutamate 173 is a binding site for L-aspartate. The tract at residues 197-200 is aspartate; the sequence is QLFK. Arginine 219 serves as a coordination point for L-aspartate. Residues 219–221 and glutamine 228 each bind ATP; that span reads RDE. Residue histidine 448 participates in L-aspartate binding. Glutamate 482 provides a ligand contact to ATP. Arginine 489 serves as a coordination point for L-aspartate. Residue 534-537 coordinates ATP; that stretch reads GWDR. Residues 560–598 form a disordered region; sequence GYDPLTAAPAPITAQQRKEAGVDAKPETKKAAAGEPAGA. The segment covering 575-591 has biased composition (basic and acidic residues); it reads QRKEAGVDAKPETKKAA.

The protein belongs to the class-II aminoacyl-tRNA synthetase family. Type 1 subfamily. In terms of assembly, homodimer.

It is found in the cytoplasm. It carries out the reaction tRNA(Asx) + L-aspartate + ATP = L-aspartyl-tRNA(Asx) + AMP + diphosphate. Aspartyl-tRNA synthetase with relaxed tRNA specificity since it is able to aspartylate not only its cognate tRNA(Asp) but also tRNA(Asn). Reaction proceeds in two steps: L-aspartate is first activated by ATP to form Asp-AMP and then transferred to the acceptor end of tRNA(Asp/Asn). The sequence is that of Aspartate--tRNA(Asp/Asn) ligase from Kineococcus radiotolerans (strain ATCC BAA-149 / DSM 14245 / SRS30216).